The sequence spans 383 residues: Putative glutamate--cysteine ligase 2 (383 aa).

This sequence belongs to the glutamate--cysteine ligase type 2 family. YbdK subfamily.

The catalysed reaction is L-cysteine + L-glutamate + ATP = gamma-L-glutamyl-L-cysteine + ADP + phosphate + H(+). In terms of biological role, ATP-dependent carboxylate-amine ligase which exhibits weak glutamate--cysteine ligase activity. The protein is Putative glutamate--cysteine ligase 2 of Legionella pneumophila subsp. pneumophila (strain Philadelphia 1 / ATCC 33152 / DSM 7513).